The primary structure comprises 673 residues: DNA ligase (673 aa).

NAD(+) contacts are provided by residues 34-38, 83-84, and glutamate 116; these read DAEYD and SL. Lysine 118 acts as the N6-AMP-lysine intermediate in catalysis. Residues arginine 139, glutamate 176, lysine 293, and lysine 317 each coordinate NAD(+). Residues cysteine 411, cysteine 414, cysteine 429, and cysteine 435 each contribute to the Zn(2+) site. Positions 595–673 constitute a BRCT domain; sequence NQQNPFFGKT…EDEFLKWVNS (79 aa).

The protein belongs to the NAD-dependent DNA ligase family. LigA subfamily. Mg(2+) serves as cofactor. It depends on Mn(2+) as a cofactor.

It catalyses the reaction NAD(+) + (deoxyribonucleotide)n-3'-hydroxyl + 5'-phospho-(deoxyribonucleotide)m = (deoxyribonucleotide)n+m + AMP + beta-nicotinamide D-nucleotide.. Its function is as follows. DNA ligase that catalyzes the formation of phosphodiester linkages between 5'-phosphoryl and 3'-hydroxyl groups in double-stranded DNA using NAD as a coenzyme and as the energy source for the reaction. It is essential for DNA replication and repair of damaged DNA. The chain is DNA ligase from Legionella pneumophila subsp. pneumophila (strain Philadelphia 1 / ATCC 33152 / DSM 7513).